Here is a 419-residue protein sequence, read N- to C-terminus: Gamma-glutamyl phosphate reductase (419 aa).

The protein belongs to the gamma-glutamyl phosphate reductase family.

Its subcellular location is the cytoplasm. It carries out the reaction L-glutamate 5-semialdehyde + phosphate + NADP(+) = L-glutamyl 5-phosphate + NADPH + H(+). The protein operates within amino-acid biosynthesis; L-proline biosynthesis; L-glutamate 5-semialdehyde from L-glutamate: step 2/2. Catalyzes the NADPH-dependent reduction of L-glutamate 5-phosphate into L-glutamate 5-semialdehyde and phosphate. The product spontaneously undergoes cyclization to form 1-pyrroline-5-carboxylate. In Yersinia enterocolitica serotype O:8 / biotype 1B (strain NCTC 13174 / 8081), this protein is Gamma-glutamyl phosphate reductase.